Consider the following 183-residue polypeptide: YPLLPLSDLFAKAVHRAQHLHLVAAETTKDFERKYIPEEQRHSHKSSPSAFCQSETIPAPTGKEDAQQRSDRELLLYSLLLIQSWLNPIQNLSAFRTSDRVYDKLRDLEEGIFALMKTLEDGGSSQGFAWLKFSYERFDGNLSEEALMKNYGLLACFKKDMHKVETYLKVMNCKRFAESNCTV.

Residue His19 participates in Zn(2+) binding. A disordered region spans residues 38-67; it reads EEQRHSHKSSPSAFCQSETIPAPTGKEDAQ. Polar residues predominate over residues 46 to 56; it reads SSPSAFCQSET. The cysteines at positions 52 and 156 are disulfide-linked. Glu165 serves as a coordination point for Zn(2+). A disulfide bridge connects residues Cys173 and Cys181.

It belongs to the somatotropin/prolactin family.

The protein resides in the secreted. Its function is as follows. Growth hormone plays an important role in growth control and is involved in the regulation of several anabolic processes. Implicated as an osmoregulatory substance important for seawater adaptation. The chain is Somatotropin (gh) from Prionace glauca (Blue shark).